Here is a 458-residue protein sequence, read N- to C-terminus: Phosphoglucosamine mutase (458 aa).

Catalysis depends on Ser-108, which acts as the Phosphoserine intermediate. Ser-108, Asp-247, Asp-249, and Asp-251 together coordinate Mg(2+). The residue at position 108 (Ser-108) is a Phosphoserine.

Belongs to the phosphohexose mutase family. The cofactor is Mg(2+). In terms of processing, activated by phosphorylation.

It carries out the reaction alpha-D-glucosamine 1-phosphate = D-glucosamine 6-phosphate. Functionally, catalyzes the conversion of glucosamine-6-phosphate to glucosamine-1-phosphate. This chain is Phosphoglucosamine mutase, found in Thiobacillus denitrificans (strain ATCC 25259 / T1).